The following is a 590-amino-acid chain: L-gulonolactone oxidase 5 (590 aa).

Residues 1–31 (MAFGYSPSYCSFWRTLLGLYCLFTLVHTVIS) form the signal peptide. One can recognise an FAD-binding PCMH-type domain in the interval 60-242 (STCRAANVAY…SQVTFELQPM (183 aa)).

Belongs to the oxygen-dependent FAD-linked oxidoreductase family. Requires FAD as cofactor.

The enzyme catalyses L-gulono-1,4-lactone + O2 = L-ascorbate + H2O2 + H(+). It participates in cofactor biosynthesis; L-ascorbate biosynthesis. Its function is as follows. Catalyzes the oxidation of L-gulono-1,4-lactone to ascorbic acid. L-gulono-1,4-lactone is oxidized to hydrogen peroxide and L-xylo-hexulonolactone which spontaneously isomerizes to L-ascorbate. This is L-gulonolactone oxidase 5 from Arabidopsis thaliana (Mouse-ear cress).